Consider the following 667-residue polypeptide: Primary amine oxidase (667 aa).

The signal sequence occupies residues 1 to 18; that stretch reads KFALFSVLTLLSFHAVFS. A glycan (N-linked (GlcNAc...) asparagine) is linked at Asn-149. Cys-155 and Cys-176 are joined by a disulfide. The disordered stretch occupies residues 216–246; the sequence is PTAENTEYQVSKQSPPFGPKQHSLTSHQPQG. A compositionally biased stretch (polar residues) spans 218–229; sequence AENTEYQVSKQS. N-linked (GlcNAc...) asparagine glycosylation occurs at Asn-252. Residue 316–327 coordinates substrate; sequence FFDSGEFGFGLS. Asp-318 serves as the catalytic Proton acceptor. An intrachain disulfide couples Cys-337 to Cys-363. Asn-382 is a glycosylation site (N-linked (GlcNAc...) asparagine). Position 402-407 (402-407) interacts with substrate; sequence VGNYDN. The active-site Schiff-base intermediate with substrate; via topaquinone is Tyr-405. Residue Tyr-405 is modified to 2',4',5'-topaquinone. His-460 and His-462 together coordinate Cu cation. 3 residues coordinate Mn(2+): Asp-469, Phe-470, and Asp-471. The N-linked (GlcNAc...) asparagine glycan is linked to Asn-576. 2 residues coordinate Mn(2+): Asp-610 and Ile-611. A Cu cation-binding site is contributed by His-621.

Belongs to the copper/topaquinone oxidase family. In terms of assembly, homodimer. Cu cation serves as cofactor. The cofactor is Zn(2+). Requires L-topaquinone as cofactor. It depends on Mn(2+) as a cofactor. In terms of processing, glycosylated; contains two carbohydrate chains per monomer. Post-translationally, topaquinone (TPQ) is generated by copper-dependent autoxidation of a specific tyrosyl residue.

It catalyses the reaction a primary methyl amine + O2 + H2O = an aldehyde + H2O2 + NH4(+). This is Primary amine oxidase from Lens culinaris (Lentil).